We begin with the raw amino-acid sequence, 284 residues long: Asialoglycoprotein receptor 1 (284 aa).

The span at 1 to 18 (MTKDYQDFQHLDNDNDHH) shows a compositional bias: basic and acidic residues. The segment at 1–25 (MTKDYQDFQHLDNDNDHHQLRRGPP) is disordered. The Cytoplasmic portion of the chain corresponds to 1–39 (MTKDYQDFQHLDNDNDHHQLRRGPPPTPRLLQRLCSGSR). The short motif at 5-8 (YQDF) is the Endocytosis signal element. Cys35 is lipidated: S-palmitoyl cysteine. Residues 40–60 (LLLLSSSLSILLLVVVCVITS) traverse the membrane as a helical; Signal-anchor for type II membrane protein segment. Residues 59–117 (TSQNSQLREDLLALRQNFSNLTVSTEDQVKALSTQGSSVGRKMKLVESKLEKQQKDLTE) adopt a coiled-coil conformation. Over 61–284 (QNSQLREDLL…VCETKLDKAN (224 aa)) the chain is Extracellular. Residues Asn75, Asn78, and Asn146 are each glycosylated (N-linked (GlcNAc...) asparagine). 3 cysteine pairs are disulfide-bonded: Cys153–Cys164, Cys181–Cys276, and Cys254–Cys268. The region spanning 160–277 (YEGSCYWFSS…CRRPYRWVCE (118 aa)) is the C-type lectin domain. Ca(2+)-binding residues include Val190, Glu196, Asp215, Gln239, Asp241, Glu252, Asp253, Asn264, Asp265, and Glu277.

As to quaternary structure, interacts with LASS2. In terms of processing, phosphorylated on a cytoplasmic Ser residue. Expressed exclusively in hepatic parenchymal cells.

It is found in the membrane. Mediates the endocytosis of plasma glycoproteins to which the terminal sialic acid residue on their complex carbohydrate moieties has been removed. The receptor recognizes terminal galactose and N-acetylgalactosamine units. After ligand binding to the receptor, the resulting complex is internalized and transported to a sorting organelle, where receptor and ligand are disassociated. The receptor then returns to the cell membrane surface. In Mus musculus (Mouse), this protein is Asialoglycoprotein receptor 1 (Asgr1).